The primary structure comprises 293 residues: ATP synthase gamma chain (293 aa).

Belongs to the ATPase gamma chain family. F-type ATPases have 2 components, CF(1) - the catalytic core - and CF(0) - the membrane proton channel. CF(1) has five subunits: alpha(3), beta(3), gamma(1), delta(1), epsilon(1). CF(0) has three main subunits: a, b and c.

The protein resides in the cell inner membrane. Its function is as follows. Produces ATP from ADP in the presence of a proton gradient across the membrane. The gamma chain is believed to be important in regulating ATPase activity and the flow of protons through the CF(0) complex. The sequence is that of ATP synthase gamma chain from Beijerinckia indica subsp. indica (strain ATCC 9039 / DSM 1715 / NCIMB 8712).